The following is a 245-amino-acid chain: Orotidine 5'-phosphate decarboxylase (245 aa).

Substrate-binding positions include D22, K44, 71–80, T131, R192, Q201, G221, and R222; that span reads DLKFHDIPNT. Residue K73 is the Proton donor of the active site.

Belongs to the OMP decarboxylase family. Type 1 subfamily. As to quaternary structure, homodimer.

The catalysed reaction is orotidine 5'-phosphate + H(+) = UMP + CO2. It functions in the pathway pyrimidine metabolism; UMP biosynthesis via de novo pathway; UMP from orotate: step 2/2. Its function is as follows. Catalyzes the decarboxylation of orotidine 5'-monophosphate (OMP) to uridine 5'-monophosphate (UMP). The polypeptide is Orotidine 5'-phosphate decarboxylase (Klebsiella pneumoniae (strain 342)).